A 349-amino-acid chain; its full sequence is Protein RecA (349 aa).

Position 65–72 (65–72) interacts with ATP; the sequence is GPESSGKT.

Belongs to the RecA family.

It is found in the cytoplasm. Its function is as follows. Can catalyze the hydrolysis of ATP in the presence of single-stranded DNA, the ATP-dependent uptake of single-stranded DNA by duplex DNA, and the ATP-dependent hybridization of homologous single-stranded DNAs. It interacts with LexA causing its activation and leading to its autocatalytic cleavage. The sequence is that of Protein RecA from Azotobacter vinelandii.